Here is a 111-residue protein sequence, read N- to C-terminus: Vacuolar ATPase assembly integral membrane protein VMA21 (111 aa).

Residues 1–39 are Cytoplasmic-facing; that stretch reads MATRRIVATEKSILEKDDHIGSSPAAGEKSNITPAVPLD. The chain crosses the membrane as a helical span at residues 40–60; that stretch reads VILKLLAFTLAMVVIPIGSYF. The Lumenal segment spans residues 61 to 73; the sequence is VTVNSIFKGNSTY. Residues 74-94 form a helical membrane-spanning segment; it reads AGALAAIMANVVLVAYVVVAM. The Cytoplasmic portion of the chain corresponds to 95 to 111; that stretch reads NEDQTEQEKAKEGKKDR. A Prevents secretion from ER motif is present at residues 108–111; sequence KKDR.

This sequence belongs to the VMA21 family.

It localises to the endoplasmic reticulum membrane. The protein resides in the endoplasmic reticulum-Golgi intermediate compartment membrane. Its subcellular location is the cytoplasmic vesicle. It is found in the COPII-coated vesicle membrane. Functionally, required for the assembly of the V0 complex of the vacuolar ATPase (V-ATPase) in the endoplasmic reticulum. The protein is Vacuolar ATPase assembly integral membrane protein VMA21 of Pyricularia oryzae (strain 70-15 / ATCC MYA-4617 / FGSC 8958) (Rice blast fungus).